We begin with the raw amino-acid sequence, 225 residues long: 3-demethoxyubiquinol 3-hydroxylase (225 aa).

The span at 1–11 (MSVASTSSGFT) shows a compositional bias: polar residues. A disordered region spans residues 1-20 (MSVASTSSGFTPFSRRRGPL). Residues Glu-74, Glu-104, His-107, Glu-156, Glu-188, and His-191 each contribute to the Fe cation site. The disordered stretch occupies residues 181-203 (VSQMKDDEAQHRASAERAGGVPL). Basic and acidic residues predominate over residues 184–195 (MKDDEAQHRASA).

It belongs to the COQ7 family. It depends on Fe cation as a cofactor.

The protein localises to the cell membrane. It carries out the reaction a 5-methoxy-2-methyl-3-(all-trans-polyprenyl)benzene-1,4-diol + AH2 + O2 = a 3-demethylubiquinol + A + H2O. The protein operates within cofactor biosynthesis; ubiquinone biosynthesis. Its function is as follows. Catalyzes the hydroxylation of 2-nonaprenyl-3-methyl-6-methoxy-1,4-benzoquinol during ubiquinone biosynthesis. This chain is 3-demethoxyubiquinol 3-hydroxylase, found in Bordetella petrii (strain ATCC BAA-461 / DSM 12804 / CCUG 43448).